A 328-amino-acid polypeptide reads, in one-letter code: Alanine racemase (328 aa).

The active-site Proton acceptor; specific for D-alanine is Lys-33. Lys-33 bears the N6-(pyridoxal phosphate)lysine mark. A substrate-binding site is contributed by Arg-118. Tyr-237 (proton acceptor; specific for L-alanine) is an active-site residue. Met-283 contacts substrate.

The protein belongs to the alanine racemase family. It depends on pyridoxal 5'-phosphate as a cofactor.

The enzyme catalyses L-alanine = D-alanine. The protein operates within amino-acid biosynthesis; D-alanine biosynthesis; D-alanine from L-alanine: step 1/1. Its function is as follows. Catalyzes the interconversion of L-alanine and D-alanine. May also act on other amino acids. This chain is Alanine racemase (alr), found in Campylobacter jejuni subsp. jejuni serotype O:6 (strain 81116 / NCTC 11828).